The sequence spans 189 residues: Mediator of RNA polymerase II transcription subunit 28 (189 aa).

Positions 75-115 (YMLIKDENQDLSIEIQRKEALLQKHYNRLEEWKACLSDIQQ) form a coiled coil. Residues 124-147 (PIGSGMLQGPGGGMPPMGGTPPRP) are disordered. Gly residues predominate over residues 129–139 (MLQGPGGGMPP).

This sequence belongs to the Mediator complex subunit 28 family. In terms of assembly, component of the Mediator complex, which includes at least CDK8, MED4, MED6, MED11, MED14, MED17, MED18, MED20, MED21, MED22, MED27, MED28, MED30 and MED31.

Its subcellular location is the nucleus. Functionally, component of the Mediator complex, a coactivator involved in the regulated transcription of nearly all RNA polymerase II-dependent genes. Mediator functions as a bridge to convey information from gene-specific regulatory proteins to the basal RNA polymerase II transcription machinery. Mediator is recruited to promoters by direct interactions with regulatory proteins and serves as a scaffold for the assembly of a functional preinitiation complex with RNA polymerase II and the general transcription factors. The protein is Mediator of RNA polymerase II transcription subunit 28 (MED28) of Drosophila melanogaster (Fruit fly).